A 362-amino-acid chain; its full sequence is Microfibril-associated glycoprotein 3 (362 aa).

Residues 1–18 (MKLHCCLFTLVASIIVPA) form the signal peptide. Residues 19–147 (AFVLEDVDFD…LRVIFTSGDM (129 aa)) are Extracellular-facing. Residues Asn-36, Asn-41, and Asn-110 are each glycosylated (N-linked (GlcNAc...) asparagine). Positions 45-137 (PSSFELSASS…SPIRASYSVT (93 aa)) constitute an Ig-like C2-type domain. Residues Cys-73 and Cys-124 are joined by a disulfide bond. Residues 148 to 170 (SVYYMIVCLIAFTITLILNVTRL) traverse the membrane as a helical segment. The Cytoplasmic portion of the chain corresponds to 171 to 362 (CMMSSHLRKT…KDGAYENCQL (192 aa)). Disordered stretches follow at residues 285 to 306 (VINP…GSLN) and 323 to 350 (ETKS…ESNC). A compositionally biased stretch (polar residues) spans 323–337 (ETKSIDTESQGSSHF).

In terms of processing, glycosylated.

The protein localises to the cell membrane. Functionally, component of the elastin-associated microfibrils. The protein is Microfibril-associated glycoprotein 3 (MFAP3) of Homo sapiens (Human).